The sequence spans 643 residues: 1-deoxy-D-xylulose-5-phosphate synthase (643 aa).

Residues histidine 72 and 113-115 (GHA) each bind thiamine diphosphate. Residue aspartate 144 coordinates Mg(2+). Thiamine diphosphate is bound by residues 145-146 (GA), asparagine 174, tyrosine 287, and glutamate 370. Asparagine 174 serves as a coordination point for Mg(2+).

The protein belongs to the transketolase family. DXPS subfamily. In terms of assembly, homodimer. Mg(2+) is required as a cofactor. Requires thiamine diphosphate as cofactor.

It catalyses the reaction D-glyceraldehyde 3-phosphate + pyruvate + H(+) = 1-deoxy-D-xylulose 5-phosphate + CO2. The protein operates within metabolic intermediate biosynthesis; 1-deoxy-D-xylulose 5-phosphate biosynthesis; 1-deoxy-D-xylulose 5-phosphate from D-glyceraldehyde 3-phosphate and pyruvate: step 1/1. Catalyzes the acyloin condensation reaction between C atoms 2 and 3 of pyruvate and glyceraldehyde 3-phosphate to yield 1-deoxy-D-xylulose-5-phosphate (DXP). The sequence is that of 1-deoxy-D-xylulose-5-phosphate synthase from Synechococcus sp. (strain CC9605).